We begin with the raw amino-acid sequence, 152 residues long: SKP1-like protein 8 (152 aa).

The segment at 94–152 is interaction with the F-box domain of F-box proteins; the sequence is TNAANFLNNKSLLHLAGQTVADMIKGNTPKQMREFFNIENDLTPEEEAAIRRENKWAFE.

This sequence belongs to the SKP1 family. Part of a SCF (SKP1-cullin-F-box) protein ligase complex. As to expression, restricted to siliques.

The protein resides in the nucleus. The protein operates within protein modification; protein ubiquitination. Its function is as follows. Involved in ubiquitination and subsequent proteasomal degradation of target proteins. Together with CUL1, RBX1 and a F-box protein, it forms a SCF E3 ubiquitin ligase complex. The functional specificity of this complex depends on the type of F-box protein. In the SCF complex, it serves as an adapter that links the F-box protein to CUL1. The sequence is that of SKP1-like protein 8 (ASK8) from Arabidopsis thaliana (Mouse-ear cress).